Reading from the N-terminus, the 66-residue chain is FMRFamide-like neuropeptides 24 (66 aa).

Residues 1–22 (MSRTSIILVLAIFVAIAAIAQC) form the signal peptide. Residues 23-48 (RNIQYDVDEISPEAAFRYAQWGEIPH) constitute a propeptide that is removed on maturation. A Phenylalanine amide modification is found at Phe61. Positions 65–66 (SV) are excised as a propeptide.

The protein belongs to the FARP (FMRFamide related peptide) family.

The protein resides in the secreted. In terms of biological role, FMRFamides and FMRFamide-like peptides are neuropeptides. The chain is FMRFamide-like neuropeptides 24 from Caenorhabditis briggsae.